The chain runs to 304 residues: uncharacterized protein (304 aa).

Belongs to the mimivirus L137 family.

This is an uncharacterized protein from Acanthamoeba polyphaga mimivirus (APMV).